A 227-amino-acid chain; its full sequence is 2,3-bisphosphoglycerate-dependent phosphoglycerate mutase (227 aa).

Substrate contacts are provided by residues 8–15 (RHGQSIWN), 21–22 (TG), Arg58, 110–113 (ERYY), Lys121, 137–138 (RR), and 181–182 (GN). The Tele-phosphohistidine intermediate role is filled by His9. Glu110 serves as the catalytic Proton donor/acceptor.

Belongs to the phosphoglycerate mutase family. BPG-dependent PGAM subfamily. Homodimer.

It carries out the reaction (2R)-2-phosphoglycerate = (2R)-3-phosphoglycerate. The protein operates within carbohydrate degradation; glycolysis; pyruvate from D-glyceraldehyde 3-phosphate: step 3/5. Functionally, catalyzes the interconversion of 2-phosphoglycerate and 3-phosphoglycerate. The sequence is that of 2,3-bisphosphoglycerate-dependent phosphoglycerate mutase from Pseudoalteromonas atlantica (strain T6c / ATCC BAA-1087).